A 241-amino-acid chain; its full sequence is Methylthioribulose-1-phosphate dehydratase (241 aa).

Cysteine 100 contributes to the substrate binding site. 2 residues coordinate Zn(2+): histidine 117 and histidine 119. Catalysis depends on glutamate 146, which acts as the Proton donor/acceptor. Zn(2+) is bound at residue histidine 202.

It belongs to the aldolase class II family. MtnB subfamily. Zn(2+) serves as cofactor.

It is found in the cytoplasm. The enzyme catalyses 5-(methylsulfanyl)-D-ribulose 1-phosphate = 5-methylsulfanyl-2,3-dioxopentyl phosphate + H2O. It functions in the pathway amino-acid biosynthesis; L-methionine biosynthesis via salvage pathway; L-methionine from S-methyl-5-thio-alpha-D-ribose 1-phosphate: step 2/6. Functionally, catalyzes the dehydration of methylthioribulose-1-phosphate (MTRu-1-P) into 2,3-diketo-5-methylthiopentyl-1-phosphate (DK-MTP-1-P). The protein is Methylthioribulose-1-phosphate dehydratase of Ajellomyces dermatitidis (strain ER-3 / ATCC MYA-2586) (Blastomyces dermatitidis).